Consider the following 343-residue polypeptide: 3-hydroxy-3-methylglutaryl-CoA lyase, cytoplasmic (343 aa).

Gly2 carries the N-myristoyl glycine lipid modification. The Pyruvate carboxyltransferase domain occupies 48-315 (VKIVEVGPRD…NTGVDLHKVM (268 aa)). A substrate-binding site is contributed by Arg56. Residues Asp57, His248, and His250 each contribute to the a divalent metal cation site. The active site involves Cys281. Residue Asn290 coordinates a divalent metal cation.

The protein belongs to the HMG-CoA lyase family. It depends on a divalent metal cation as a cofactor. As to expression, present at high level in duodenum and small intestine (at protein level).

It is found in the cytoplasm. Its subcellular location is the cytosol. It localises to the endoplasmic reticulum membrane. It carries out the reaction (3S)-3-hydroxy-3-methylglutaryl-CoA = acetoacetate + acetyl-CoA. Its pathway is metabolic intermediate metabolism; (S)-3-hydroxy-3-methylglutaryl-CoA degradation; acetoacetate from (S)-3-hydroxy-3-methylglutaryl-CoA: step 1/1. Its function is as follows. Non-mitochondrial 3-hydroxy-3-methylglutaryl-CoA lyase that catalyzes a cation-dependent cleavage of (S)-3-hydroxy-3-methylglutaryl-CoA into acetyl-CoA and acetoacetate, a key step in ketogenesis, the products of which support energy production in nonhepatic animal tissues. The sequence is that of 3-hydroxy-3-methylglutaryl-CoA lyase, cytoplasmic (Hmgcll1) from Rattus norvegicus (Rat).